Consider the following 350-residue polypeptide: Protein RecA (350 aa).

ATP is bound at residue 67 to 74 (GPESSGKT).

This sequence belongs to the RecA family.

Its subcellular location is the cytoplasm. Can catalyze the hydrolysis of ATP in the presence of single-stranded DNA, the ATP-dependent uptake of single-stranded DNA by duplex DNA, and the ATP-dependent hybridization of homologous single-stranded DNAs. It interacts with LexA causing its activation and leading to its autocatalytic cleavage. The sequence is that of Protein RecA from Chlamydia felis (strain Fe/C-56) (Chlamydophila felis).